Reading from the N-terminus, the 314-residue chain is 2,3-dihydroxyphenylpropionate/2,3-dihydroxicinnamic acid 1,2-dioxygenase (314 aa).

The active-site Proton donor is His-115. His-179 acts as the Proton acceptor in catalysis.

Belongs to the LigB/MhpB extradiol dioxygenase family. As to quaternary structure, homotetramer. The cofactor is Fe(2+).

It catalyses the reaction 3-(2,3-dihydroxyphenyl)propanoate + O2 = (2Z,4E)-2-hydroxy-6-oxonona-2,4-dienedioate + H(+). The catalysed reaction is (2E)-3-(2,3-dihydroxyphenyl)prop-2-enoate + O2 = (2Z,4E,7E)-2-hydroxy-6-oxonona-2,4,7-trienedioate + H(+). Its pathway is aromatic compound metabolism; 3-phenylpropanoate degradation. Its function is as follows. Catalyzes the non-heme iron(II)-dependent oxidative cleavage of 2,3-dihydroxyphenylpropionic acid and 2,3-dihydroxicinnamic acid into 2-hydroxy-6-ketononadienedioate and 2-hydroxy-6-ketononatrienedioate, respectively. This Escherichia coli O81 (strain ED1a) protein is 2,3-dihydroxyphenylpropionate/2,3-dihydroxicinnamic acid 1,2-dioxygenase.